The primary structure comprises 496 residues: Bifunctional protein HldE (496 aa).

Positions 1-335 are ribokinase; that stretch reads MIKHNPPSPE…GALFRSHGPT (335 aa). 211-214 lines the ATP pocket; sequence NRKE. The active site involves aspartate 280. Positions 363-496 are cytidylyltransferase; sequence FTNGCFDILH…IGKLRAGSTS (134 aa).

In the N-terminal section; belongs to the carbohydrate kinase PfkB family. This sequence in the C-terminal section; belongs to the cytidylyltransferase family. As to quaternary structure, homodimer.

The catalysed reaction is D-glycero-beta-D-manno-heptose 7-phosphate + ATP = D-glycero-beta-D-manno-heptose 1,7-bisphosphate + ADP + H(+). It catalyses the reaction D-glycero-beta-D-manno-heptose 1-phosphate + ATP + H(+) = ADP-D-glycero-beta-D-manno-heptose + diphosphate. It participates in nucleotide-sugar biosynthesis; ADP-L-glycero-beta-D-manno-heptose biosynthesis; ADP-L-glycero-beta-D-manno-heptose from D-glycero-beta-D-manno-heptose 7-phosphate: step 1/4. The protein operates within nucleotide-sugar biosynthesis; ADP-L-glycero-beta-D-manno-heptose biosynthesis; ADP-L-glycero-beta-D-manno-heptose from D-glycero-beta-D-manno-heptose 7-phosphate: step 3/4. Its function is as follows. Catalyzes the phosphorylation of D-glycero-D-manno-heptose 7-phosphate at the C-1 position to selectively form D-glycero-beta-D-manno-heptose-1,7-bisphosphate. Functionally, catalyzes the ADP transfer from ATP to D-glycero-beta-D-manno-heptose 1-phosphate, yielding ADP-D-glycero-beta-D-manno-heptose. In Mesorhizobium japonicum (strain LMG 29417 / CECT 9101 / MAFF 303099) (Mesorhizobium loti (strain MAFF 303099)), this protein is Bifunctional protein HldE.